Here is a 375-residue protein sequence, read N- to C-terminus: Queuine tRNA-ribosyltransferase (375 aa).

Asp90 serves as the catalytic Proton acceptor. Substrate contacts are provided by residues 90 to 94, Asp144, Gln190, and Gly217; that span reads DSGGF. Residues 248–254 form an RNA binding region; it reads GIGTPHY. The active-site Nucleophile is the Asp267. Positions 272–276 are RNA binding; important for wobble base 34 recognition; it reads TRIAR. Residues Cys305, Cys307, Cys310, and His336 each contribute to the Zn(2+) site.

Belongs to the queuine tRNA-ribosyltransferase family. As to quaternary structure, homodimer. Within each dimer, one monomer is responsible for RNA recognition and catalysis, while the other monomer binds to the replacement base PreQ1. Zn(2+) serves as cofactor.

The catalysed reaction is 7-aminomethyl-7-carbaguanine + guanosine(34) in tRNA = 7-aminomethyl-7-carbaguanosine(34) in tRNA + guanine. Its pathway is tRNA modification; tRNA-queuosine biosynthesis. Its function is as follows. Catalyzes the base-exchange of a guanine (G) residue with the queuine precursor 7-aminomethyl-7-deazaguanine (PreQ1) at position 34 (anticodon wobble position) in tRNAs with GU(N) anticodons (tRNA-Asp, -Asn, -His and -Tyr). Catalysis occurs through a double-displacement mechanism. The nucleophile active site attacks the C1' of nucleotide 34 to detach the guanine base from the RNA, forming a covalent enzyme-RNA intermediate. The proton acceptor active site deprotonates the incoming PreQ1, allowing a nucleophilic attack on the C1' of the ribose to form the product. After dissociation, two additional enzymatic reactions on the tRNA convert PreQ1 to queuine (Q), resulting in the hypermodified nucleoside queuosine (7-(((4,5-cis-dihydroxy-2-cyclopenten-1-yl)amino)methyl)-7-deazaguanosine). This is Queuine tRNA-ribosyltransferase from Borrelia hermsii (strain HS1 / DAH).